The following is a 700-amino-acid chain: Peroxisomal acyl-coenzyme A oxidase 1 (700 aa).

FAD contacts are provided by residues Thr147, Gly186, and 412–417; that span reads CGGHGY. Glu437 acts as the Proton acceptor in catalysis. The Microbody targeting signal motif lies at 698–700; the sequence is SKL.

Belongs to the acyl-CoA oxidase family. Requires FAD as cofactor.

It is found in the peroxisome. It catalyses the reaction a 2,3-saturated acyl-CoA + O2 = a (2E)-enoyl-CoA + H2O2. In terms of biological role, catalyzes the desaturation of acyl-CoAs to 2-trans-enoyl-CoAs. First enzyme of the fatty acid beta-oxidation pathway. This is Peroxisomal acyl-coenzyme A oxidase 1 (acox1) from Dictyostelium discoideum (Social amoeba).